A 373-amino-acid chain; its full sequence is Peroxisomal biogenesis factor 3 (373 aa).

At 1–15 the chain is on the cytoplasmic side; it reads MLRSVWNFLKRHKKK. The interval 1–45 is targeting to peroxisomes; the sequence is MLRSVWNFLKRHKKKCIFLGTVLGGVYILGKYGQKKIREIQEREA. The chain crosses the membrane as a helical span at residues 16–36; the sequence is CIFLGTVLGGVYILGKYGQKK. The Peroxisomal segment spans residues 37-116; sequence IREIQEREAA…LKIISFTRST (80 aa). Residues 117 to 140 traverse the membrane as a helical segment; that stretch reads VAVYSTCMLVVLLRVQLNIIGGYI. An interaction with PEX19 region spans residues 120–136; it reads YSTCMLVVLLRVQLNII. Topologically, residues 141 to 373 are cytoplasmic; that stretch reads YLDNAAVGKN…AFSTPQQLEK (233 aa).

It belongs to the peroxin-3 family. Interacts with PEX19. In terms of tissue distribution, found in all examined tissues.

Its subcellular location is the peroxisome membrane. Involved in peroxisome biosynthesis and integrity. Assembles membrane vesicles before the matrix proteins are translocated. As a docking factor for PEX19, is necessary for the import of peroxisomal membrane proteins in the peroxisomes. This chain is Peroxisomal biogenesis factor 3 (PEX3), found in Homo sapiens (Human).